We begin with the raw amino-acid sequence, 473 residues long: Arginine biosynthesis bifunctional protein ArgJ, mitochondrial (473 aa).

Residues Thr-201, Lys-230, Thr-241, Glu-328, Asn-468, and Thr-473 each contribute to the substrate site. Thr-241 acts as the Nucleophile in catalysis.

It belongs to the ArgJ family. As to quaternary structure, heterodimer of an alpha and a beta chain. Post-translationally, the alpha and beta chains are autoproteolytically processed from a single precursor protein within the mitochondrion.

It is found in the mitochondrion matrix. The catalysed reaction is N(2)-acetyl-L-ornithine + L-glutamate = N-acetyl-L-glutamate + L-ornithine. It catalyses the reaction L-glutamate + acetyl-CoA = N-acetyl-L-glutamate + CoA + H(+). The protein operates within amino-acid biosynthesis; L-arginine biosynthesis; L-ornithine and N-acetyl-L-glutamate from L-glutamate and N(2)-acetyl-L-ornithine (cyclic): step 1/1. It participates in amino-acid biosynthesis; L-arginine biosynthesis; N(2)-acetyl-L-ornithine from L-glutamate: step 1/4. Functionally, catalyzes two activities which are involved in the cyclic version of arginine biosynthesis: the synthesis of acetylglutamate from glutamate and acetyl-CoA, and of ornithine by transacetylation between acetylornithine and glutamate. The sequence is that of Arginine biosynthesis bifunctional protein ArgJ, mitochondrial from Ajellomyces capsulatus (strain H143) (Darling's disease fungus).